A 116-amino-acid chain; its full sequence is Iron-sulfur cluster insertion protein ErpA (116 aa).

Positions 44, 108, and 110 each coordinate iron-sulfur cluster.

Belongs to the HesB/IscA family. As to quaternary structure, homodimer. It depends on iron-sulfur cluster as a cofactor.

Required for insertion of 4Fe-4S clusters for at least IspG. This is Iron-sulfur cluster insertion protein ErpA from Shewanella loihica (strain ATCC BAA-1088 / PV-4).